A 272-amino-acid polypeptide reads, in one-letter code: Shikimate dehydrogenase (NADP(+)) (272 aa).

Residues 14–16 (SKS) and Thr-61 each bind shikimate. The Proton acceptor role is filled by Lys-65. Position 77 (Glu-77) interacts with NADP(+). Shikimate-binding residues include Asn-86 and Asp-102. NADP(+) is bound by residues 126–130 (GAGGA), 149–154 (NRTVSR), and Met-213. Residue Tyr-215 participates in shikimate binding. Position 237 (Gly-237) interacts with NADP(+).

This sequence belongs to the shikimate dehydrogenase family. Homodimer.

The enzyme catalyses shikimate + NADP(+) = 3-dehydroshikimate + NADPH + H(+). It functions in the pathway metabolic intermediate biosynthesis; chorismate biosynthesis; chorismate from D-erythrose 4-phosphate and phosphoenolpyruvate: step 4/7. In terms of biological role, involved in the biosynthesis of the chorismate, which leads to the biosynthesis of aromatic amino acids. Catalyzes the reversible NADPH linked reduction of 3-dehydroshikimate (DHSA) to yield shikimate (SA). This is Shikimate dehydrogenase (NADP(+)) from Escherichia coli O6:H1 (strain CFT073 / ATCC 700928 / UPEC).